Consider the following 165-residue polypeptide: Putative 1,2-phenylacetyl-CoA epoxidase, subunit D (165 aa).

As to quaternary structure, monomer.

It participates in aromatic compound metabolism; phenylacetate degradation. Possible component of 1,2-phenylacetyl-CoA epoxidase multicomponent enzyme system which catalyzes the reduction of phenylacetyl-CoA (PA-CoA) to form 1,2-epoxyphenylacetyl-CoA. The subunit D may have a function related to the maturation of the monooxygenase complex, rather than direct involvement in catalysis. PaaD could assist either in maturation of PaaE or PaaA. The polypeptide is Putative 1,2-phenylacetyl-CoA epoxidase, subunit D (paaD) (Escherichia coli (strain K12)).